Consider the following 62-residue polypeptide: Sperm protamine P1 (62 aa).

Residues 1-62 (MARYRRHSRS…RYSRRGRRRY (62 aa)) form a disordered region.

Belongs to the protamine P1 family. As to expression, testis.

It is found in the nucleus. The protein localises to the chromosome. Protamines substitute for histones in the chromatin of sperm during the haploid phase of spermatogenesis. They compact sperm DNA into a highly condensed, stable and inactive complex. The protein is Sperm protamine P1 (PRM1) of Neophascogale lorentzii (Long-clawed marsupial mouse).